A 1356-amino-acid polypeptide reads, in one-letter code: Pleckstrin homology domain-containing family H member 1 (1356 aa).

Residues 27–172 (FRLQASKIRE…QDALEDLRMT (146 aa)) adopt a coiled-coil conformation. Disordered stretches follow at residues 179-203 (VVPE…EQDS), 256-314 (HLQK…PKVR), and 354-414 (LHSP…PPLH). Composition is skewed to polar residues over residues 194–203 (PSDQPVEQDS), 256–265 (HLQKEGSPSQ), and 285–297 (VTAQ…GTKT). Positions 359-407 (SSKSEARAKVREEAEKMEMEALPPSGKQEERESLKSRRGELEDVELENK) form a coiled coil. 2 stretches are compositionally biased toward basic and acidic residues: residues 362-377 (SEAR…KMEM) and 385-399 (KQEE…RGEL). Phosphoserine is present on S451. 2 PH domains span residues 572-666 (ALEK…SLLK) and 681-790 (KPTV…VAAG). S739 carries the phosphoserine modification. Positions 826-980 (YSQEGLCASL…PSRMEVVSIL (155 aa)) constitute a MyTH4 domain. Residues 991-1327 (FSIPVHFANG…NHCSATVNLS (337 aa)) enclose the FERM domain.

In Mus musculus (Mouse), this protein is Pleckstrin homology domain-containing family H member 1 (Plekhh1).